The following is a 453-amino-acid chain: Transcription factor radR (453 aa).

The segment covering 1 to 30 (MPNNLQHQEGSYSLRSSNDVSPADDWTQTN) has biased composition (polar residues). Positions 1 to 45 (MPNNLQHQEGSYSLRSSNDVSPADDWTQTNDPKEKKRIQNRVAQR) are disordered. A bZIP domain is found at 30–62 (NDPKEKKRIQNRVAQRTYRNRIRARLEELENKI). Residues 33-50 (KEKKRIQNRVAQRTYRNR) are basic motif. Positions 51–58 (IRARLEEL) are leucine-zipper. A disordered region spans residues 160 to 184 (APRAAQARSIAPTSTGMHQISPSYG). Polar residues predominate over residues 170–181 (APTSTGMHQISP).

Belongs to the bZIP family.

Its subcellular location is the nucleus. In terms of biological role, transcription factor that positively regulates the expression of the gene clusters that mediate the biosynthesis of pestheic acid, a diphenyl ether which is a biosynthetic precursor of the unique chloropupukeananes. This chain is Transcription factor radR, found in Floropilus chiversii (Chaetomium chiversii).